A 198-amino-acid polypeptide reads, in one-letter code: Molybdenum cofactor guanylyltransferase (198 aa).

GTP contacts are provided by residues 14–16 (LAG), Lys-27, Asp-73, and Asp-103. A Mg(2+)-binding site is contributed by Asp-103.

It belongs to the MobA family. As to quaternary structure, monomer. Mg(2+) is required as a cofactor.

The protein localises to the cytoplasm. The catalysed reaction is Mo-molybdopterin + GTP + H(+) = Mo-molybdopterin guanine dinucleotide + diphosphate. In terms of biological role, transfers a GMP moiety from GTP to Mo-molybdopterin (Mo-MPT) cofactor (Moco or molybdenum cofactor) to form Mo-molybdopterin guanine dinucleotide (Mo-MGD) cofactor. The chain is Molybdenum cofactor guanylyltransferase from Pseudomonas aeruginosa (strain ATCC 15692 / DSM 22644 / CIP 104116 / JCM 14847 / LMG 12228 / 1C / PRS 101 / PAO1).